A 383-amino-acid polypeptide reads, in one-letter code: Chaperone protein DnaJ (383 aa).

A J domain is found at 5 to 70 (DYYELLGVEK…QKRAAYDRFG (66 aa)). A CR-type zinc finger spans residues 137-215 (GKTATVKVPS…CGGSGRTRKE (79 aa)). Zn(2+) contacts are provided by C150, C153, C167, C170, C189, C192, C203, and C206. CXXCXGXG motif repeat units follow at residues 150–157 (CEDCKGTG), 167–174 (CSACHGHG), 189–196 (CPTCQGMG), and 203–210 (CRSCGGSG).

Belongs to the DnaJ family. In terms of assembly, homodimer. It depends on Zn(2+) as a cofactor.

The protein resides in the cytoplasm. In terms of biological role, participates actively in the response to hyperosmotic and heat shock by preventing the aggregation of stress-denatured proteins and by disaggregating proteins, also in an autonomous, DnaK-independent fashion. Unfolded proteins bind initially to DnaJ; upon interaction with the DnaJ-bound protein, DnaK hydrolyzes its bound ATP, resulting in the formation of a stable complex. GrpE releases ADP from DnaK; ATP binding to DnaK triggers the release of the substrate protein, thus completing the reaction cycle. Several rounds of ATP-dependent interactions between DnaJ, DnaK and GrpE are required for fully efficient folding. Also involved, together with DnaK and GrpE, in the DNA replication of plasmids through activation of initiation proteins. The protein is Chaperone protein DnaJ of Paramagnetospirillum magneticum (strain ATCC 700264 / AMB-1) (Magnetospirillum magneticum).